A 185-amino-acid chain; its full sequence is Kunitz-type serine protease inhibitor DrTI (185 aa).

2 disulfide bridges follow: Cys44–Cys89 and Cys139–Cys147.

The protein belongs to the protease inhibitor I3 (leguminous Kunitz-type inhibitor) family.

It localises to the secreted. In terms of biological role, inhibits bovine trypsin and human plasma kallikrein. The protein is Kunitz-type serine protease inhibitor DrTI of Delonix regia (Royal poinciana).